Here is a 458-residue protein sequence, read N- to C-terminus: A-type ATP synthase subunit B (458 aa).

It belongs to the ATPase alpha/beta chains family. As to quaternary structure, has multiple subunits with at least A(3), B(3), C, D, E, F, H, I and proteolipid K(x).

It is found in the cell membrane. Functionally, component of the A-type ATP synthase that produces ATP from ADP in the presence of a proton gradient across the membrane. The B chain is a regulatory subunit. The protein is A-type ATP synthase subunit B of Methanocorpusculum labreanum (strain ATCC 43576 / DSM 4855 / Z).